Consider the following 33-residue polypeptide: Tail virion protein G9P (33 aa).

The chain crosses the membrane as a helical span at residues 5–25 (VGSFLGAYFLGFALFYGIGFF).

This sequence belongs to the inovirus G9P protein family.

It is found in the virion. It localises to the host membrane. Functionally, may initiate with G7P the virion concomitant assembly-budding process, by interacting with the packaging signal of the viral genome. The assembly-budding takes place at the host inner membrane. In turn, G7P and G9P are present at the end of the filamentous virion that emerges first from the bacterial host. The polypeptide is Tail virion protein G9P (IX) (Salmonella phage IKe (Bacteriophage IKe)).